Reading from the N-terminus, the 255-residue chain is BTB/POZ domain-containing protein KCTD14 (255 aa).

Positions 1 to 29 (MWQGCAVERPVGRMTSQTPLPQSPRPRRP) are disordered. The BTB domain maps to 33-130 (TVVELNVGGE…LLEDMPQIFG (98 aa)).

The polypeptide is BTB/POZ domain-containing protein KCTD14 (KCTD14) (Homo sapiens (Human)).